Consider the following 87-residue polypeptide: Small ribosomal subunit protein eS21 (87 aa).

An N-acetylmethionine modification is found at Met-1.

This sequence belongs to the eukaryotic ribosomal protein eS21 family. In terms of assembly, component of the small ribosomal subunit (SSU). Mature yeast ribosomes consist of a small (40S) and a large (60S) subunit. The 40S small subunit contains 1 molecule of ribosomal RNA (18S rRNA) and at least 33 different proteins. The large 60S subunit contains 3 rRNA molecules (25S, 5.8S and 5S rRNA) and at least 46 different proteins. Interacts with uS2A and uS2B, strongest interaction is with uS2B.

The protein resides in the cytoplasm. The protein localises to the nucleus. Component of the ribosome, a large ribonucleoprotein complex responsible for the synthesis of proteins in the cell. The small ribosomal subunit (SSU) binds messenger RNAs (mRNAs) and translates the encoded message by selecting cognate aminoacyl-transfer RNA (tRNA) molecules. The large subunit (LSU) contains the ribosomal catalytic site termed the peptidyl transferase center (PTC), which catalyzes the formation of peptide bonds, thereby polymerizing the amino acids delivered by tRNAs into a polypeptide chain. The nascent polypeptides leave the ribosome through a tunnel in the LSU and interact with protein factors that function in enzymatic processing, targeting, and the membrane insertion of nascent chains at the exit of the ribosomal tunnel. eS21 is required for the processing of the 20S rRNA-precursor to mature 18S rRNA in a late step of the maturation of 40S ribosomal subunits. Has a physiological role leading to 18S rRNA stability. The polypeptide is Small ribosomal subunit protein eS21 (rps21) (Schizosaccharomyces pombe (strain 972 / ATCC 24843) (Fission yeast)).